Here is a 130-residue protein sequence, read N- to C-terminus: Methylglyoxal synthase (130 aa).

An MGS-like domain is found at 1–130; sequence MSKPRIALIA…DLARNMQDVC (130 aa). Substrate-binding positions include histidine 11, lysine 15, 37–40, and 57–58; these read TGTT and SG. Aspartate 63 functions as the Proton donor/acceptor in the catalytic mechanism. Position 90 (histidine 90) interacts with substrate.

This sequence belongs to the methylglyoxal synthase family.

It carries out the reaction dihydroxyacetone phosphate = methylglyoxal + phosphate. Its function is as follows. Catalyzes the formation of methylglyoxal from dihydroxyacetone phosphate. The sequence is that of Methylglyoxal synthase from Burkholderia lata (strain ATCC 17760 / DSM 23089 / LMG 22485 / NCIMB 9086 / R18194 / 383).